The sequence spans 119 residues: Large ribosomal subunit protein bL20 (119 aa).

It belongs to the bacterial ribosomal protein bL20 family.

In terms of biological role, binds directly to 23S ribosomal RNA and is necessary for the in vitro assembly process of the 50S ribosomal subunit. It is not involved in the protein synthesizing functions of that subunit. The sequence is that of Large ribosomal subunit protein bL20 from Streptococcus agalactiae serotype Ia (strain ATCC 27591 / A909 / CDC SS700).